The following is a 135-amino-acid chain: Small ribosomal subunit protein bS6 (135 aa).

Polar residues predominate over residues 99-120 (QHSSLGRSTAPANPMASNTPRT). Positions 99–135 (QHSSLGRSTAPANPMASNTPRTEGQEQAKTEPQTAPA) are disordered.

This sequence belongs to the bacterial ribosomal protein bS6 family.

In terms of biological role, binds together with bS18 to 16S ribosomal RNA. The chain is Small ribosomal subunit protein bS6 from Synechococcus sp. (strain RCC307).